The primary structure comprises 749 residues: Catalase-peroxidase 2 (749 aa).

A signal peptide spans 1-27; that stretch reads MFKRTIPLFAAFTLAISPSIFPNYAHA. The segment at residues 107–229 is a cross-link (tryptophyl-tyrosyl-methioninium (Trp-Tyr) (with M-255)); the sequence is WHAAGTYRIY…LAATVMGLIY (123 aa). Residue His108 is the Proton acceptor of the active site. The tryptophyl-tyrosyl-methioninium (Tyr-Met) (with W-107) cross-link spans 229–255; sequence YVNPEGPNGVPDPLAAAEKIRETFGRM. His270 contacts heme b.

It belongs to the peroxidase family. Peroxidase/catalase subfamily. In terms of assembly, homodimer or homotetramer. Heme b is required as a cofactor. Formation of the three residue Trp-Tyr-Met cross-link is important for the catalase, but not the peroxidase activity of the enzyme.

It catalyses the reaction H2O2 + AH2 = A + 2 H2O. It carries out the reaction 2 H2O2 = O2 + 2 H2O. Functionally, bifunctional enzyme with both catalase and broad-spectrum peroxidase activity. This is Catalase-peroxidase 2 from Legionella pneumophila (strain Lens).